A 285-amino-acid chain; its full sequence is Aspartate/glutamate leucyltransferase (285 aa).

This sequence belongs to the R-transferase family. Bpt subfamily.

The protein localises to the cytoplasm. It carries out the reaction N-terminal L-glutamyl-[protein] + L-leucyl-tRNA(Leu) = N-terminal L-leucyl-L-glutamyl-[protein] + tRNA(Leu) + H(+). The enzyme catalyses N-terminal L-aspartyl-[protein] + L-leucyl-tRNA(Leu) = N-terminal L-leucyl-L-aspartyl-[protein] + tRNA(Leu) + H(+). In terms of biological role, functions in the N-end rule pathway of protein degradation where it conjugates Leu from its aminoacyl-tRNA to the N-termini of proteins containing an N-terminal aspartate or glutamate. The chain is Aspartate/glutamate leucyltransferase from Dinoroseobacter shibae (strain DSM 16493 / NCIMB 14021 / DFL 12).